We begin with the raw amino-acid sequence, 284 residues long: MLSKQIPLGIYEKALPAGECWLKRLTLAKELGFDFVEMSVDETDERLSRLDWSREQRLALVSAVAETGVRVPSMCLSAHRRFPLGSEDDAVRTQGLEIMRKAIQFAQDVGIRVIQLAGYDVYYQQANDETRCRFRDGLKESVDMASRAQVTLAMEIMDYPLMNSISKALGYAHYLNNPWFQLYPDIGNLSAWDNDVQMELQAGIGHIVAVHVKDTKPGVFKNVPFGEGVVDFERCFETLKQSGYCGPYLIEMWSETAENPAAEVAKARDWVKARMASAGLVEAA.

This sequence belongs to the L-ribulose-5-phosphate 3-epimerase family.

The enzyme catalyses L-ribulose 5-phosphate = L-xylulose 5-phosphate. The protein operates within cofactor degradation; L-ascorbate degradation; D-xylulose 5-phosphate from L-ascorbate: step 3/4. Functionally, catalyzes the isomerization of L-xylulose-5-phosphate to L-ribulose-5-phosphate. Is involved in the anaerobic L-ascorbate utilization. The chain is L-ribulose-5-phosphate 3-epimerase UlaE from Salmonella heidelberg (strain SL476).